The following is a 147-amino-acid chain: D-aminoacyl-tRNA deacylase (147 aa).

The Gly-cisPro motif, important for rejection of L-amino acids signature appears at 136–137; the sequence is GP.

This sequence belongs to the DTD family. As to quaternary structure, homodimer.

Its subcellular location is the cytoplasm. The catalysed reaction is glycyl-tRNA(Ala) + H2O = tRNA(Ala) + glycine + H(+). It catalyses the reaction a D-aminoacyl-tRNA + H2O = a tRNA + a D-alpha-amino acid + H(+). An aminoacyl-tRNA editing enzyme that deacylates mischarged D-aminoacyl-tRNAs. Also deacylates mischarged glycyl-tRNA(Ala), protecting cells against glycine mischarging by AlaRS. Acts via tRNA-based rather than protein-based catalysis; rejects L-amino acids rather than detecting D-amino acids in the active site. By recycling D-aminoacyl-tRNA to D-amino acids and free tRNA molecules, this enzyme counteracts the toxicity associated with the formation of D-aminoacyl-tRNA entities in vivo and helps enforce protein L-homochirality. The sequence is that of D-aminoacyl-tRNA deacylase from Streptococcus pneumoniae serotype 2 (strain D39 / NCTC 7466).